A 299-amino-acid polypeptide reads, in one-letter code: GTPase Era (299 aa).

The region spanning 2–170 (KTGFVALAGK…LDLIIENLPE (169 aa)) is the Era-type G domain. Positions 10–17 (GKPNVGKS) are G1. Residue 10–17 (GKPNVGKS) coordinates GTP. Positions 36 to 40 (QTTRN) are G2. Positions 57-60 (DTPG) are G3. GTP-binding positions include 57 to 61 (DTPGI) and 119 to 122 (NKID). The G4 stretch occupies residues 119–122 (NKID). Positions 149–151 (TSA) are G5. One can recognise a KH type-2 domain in the interval 201–278 (TYEEIPHSVA…FLDLHVKVKR (78 aa)).

This sequence belongs to the TRAFAC class TrmE-Era-EngA-EngB-Septin-like GTPase superfamily. Era GTPase family. Monomer.

The protein localises to the cytoplasm. The protein resides in the cell inner membrane. Functionally, an essential GTPase that binds both GDP and GTP, with rapid nucleotide exchange. Plays a role in 16S rRNA processing and 30S ribosomal subunit biogenesis and possibly also in cell cycle regulation and energy metabolism. This chain is GTPase Era, found in Thermosipho melanesiensis (strain DSM 12029 / CIP 104789 / BI429).